Consider the following 357-residue polypeptide: Low-salt glycan biosynthesis nucleotidyltransferase Agl11 (357 aa).

Residues aspartate 108 and aspartate 221 each contribute to the Mg(2+) site.

The protein belongs to the glucose-1-phosphate thymidylyltransferase family. Requires Mg(2+) as cofactor.

Its pathway is protein modification; protein glycosylation. It functions in the pathway cell surface structure biogenesis; S-layer biogenesis. Its function is as follows. Nucleotidyltransferase involved in N-glycan biosynthetic pathway that takes place under low-salt conditions (1.75 M instead of 3.4 M). Participates in the formation of the tetrasaccharide present at 'Asn-532' of S-layer glycoprotein Csg, consisting of a sulfated hexose, 2 hexoses and rhamnose. Involved in the addition of final rhamnose (sugar 4) of the tetrasaccharide on the dolichol phosphate carrier. The polypeptide is Low-salt glycan biosynthesis nucleotidyltransferase Agl11 (agl11) (Haloferax volcanii (strain ATCC 29605 / DSM 3757 / JCM 8879 / NBRC 14742 / NCIMB 2012 / VKM B-1768 / DS2) (Halobacterium volcanii)).